Reading from the N-terminus, the 350-residue chain is Secreted effector protein PipB2 (350 aa).

4 consecutive Pentapeptide repeat domains span residues 162 to 201 (ANLTAENLCDADLSGANLEGAVLFMADCEGANFKGANLSG), 202 to 241 (TSLGDSNFKNACLEDGIMCGATLDHANLTGANLQHASLLG), 247 to 286 (CNCSGANMDHTNLSGATLIRADMSGATLQGATIMAAIMED), and 287 to 326 (AVLTRANLRKASFISTNLDGADLAEANLNNTCFKDCTLTH).

As to quaternary structure, interacts with the host kinesin light chain (KLC), a subunit of the kinesin-1 motor complex.

The protein resides in the secreted. It is found in the host membrane. Its function is as follows. Effector proteins function to alter host cell physiology and promote bacterial survival in host tissues. Involved in the reorganization of late endosome/lysosome (LE/Lys) compartments in mammalian cells. Necessary and sufficient to link kinesin-1 onto the Salmonella-containing vacuole (SCV) membrane. Required for centrifugal extension of lysosomal glycoprotein-rich membrane tubules, known as Salmonella-induced filaments (Sifs), away from the SCV and toward the cell periphery. Required for virulence, but not for intracellular survival and replication in phagocytic cells. This Salmonella paratyphi A (strain ATCC 9150 / SARB42) protein is Secreted effector protein PipB2 (pipB2).